A 269-amino-acid chain; its full sequence is 4-hydroxy-tetrahydrodipicolinate reductase (269 aa).

NAD(+) contacts are provided by residues 13-18 (GASGRM) and Asp39. Arg40 contributes to the NADP(+) binding site. NAD(+) contacts are provided by residues 101 to 103 (GTT) and 125 to 128 (APNM). The Proton donor/acceptor role is filled by His158. His159 lines the (S)-2,3,4,5-tetrahydrodipicolinate pocket. Lys162 serves as the catalytic Proton donor. Residue 168-169 (GT) participates in (S)-2,3,4,5-tetrahydrodipicolinate binding.

The protein belongs to the DapB family.

The protein localises to the cytoplasm. It carries out the reaction (S)-2,3,4,5-tetrahydrodipicolinate + NAD(+) + H2O = (2S,4S)-4-hydroxy-2,3,4,5-tetrahydrodipicolinate + NADH + H(+). It catalyses the reaction (S)-2,3,4,5-tetrahydrodipicolinate + NADP(+) + H2O = (2S,4S)-4-hydroxy-2,3,4,5-tetrahydrodipicolinate + NADPH + H(+). It functions in the pathway amino-acid biosynthesis; L-lysine biosynthesis via DAP pathway; (S)-tetrahydrodipicolinate from L-aspartate: step 4/4. Its function is as follows. Catalyzes the conversion of 4-hydroxy-tetrahydrodipicolinate (HTPA) to tetrahydrodipicolinate. This chain is 4-hydroxy-tetrahydrodipicolinate reductase, found in Bordetella bronchiseptica (strain ATCC BAA-588 / NCTC 13252 / RB50) (Alcaligenes bronchisepticus).